Reading from the N-terminus, the 434-residue chain is Serine--tRNA ligase (434 aa).

239–241 (TAE) is a binding site for L-serine. An ATP-binding site is contributed by 270–272 (RSE). Residue E293 participates in L-serine binding. 357–360 (EISS) contacts ATP. S392 provides a ligand contact to L-serine.

It belongs to the class-II aminoacyl-tRNA synthetase family. Type-1 seryl-tRNA synthetase subfamily. In terms of assembly, homodimer. The tRNA molecule binds across the dimer.

It is found in the cytoplasm. It catalyses the reaction tRNA(Ser) + L-serine + ATP = L-seryl-tRNA(Ser) + AMP + diphosphate + H(+). The catalysed reaction is tRNA(Sec) + L-serine + ATP = L-seryl-tRNA(Sec) + AMP + diphosphate + H(+). It participates in aminoacyl-tRNA biosynthesis; selenocysteinyl-tRNA(Sec) biosynthesis; L-seryl-tRNA(Sec) from L-serine and tRNA(Sec): step 1/1. In terms of biological role, catalyzes the attachment of serine to tRNA(Ser). Is also able to aminoacylate tRNA(Sec) with serine, to form the misacylated tRNA L-seryl-tRNA(Sec), which will be further converted into selenocysteinyl-tRNA(Sec). The chain is Serine--tRNA ligase from Cupriavidus taiwanensis (strain DSM 17343 / BCRC 17206 / CCUG 44338 / CIP 107171 / LMG 19424 / R1) (Ralstonia taiwanensis (strain LMG 19424)).